The sequence spans 314 residues: Protein phosphatase PTC7 homolog fig (314 aa).

A PPM-type phosphatase domain is found at 43–309 (PYLVTVVQGR…DDITLILSSV (267 aa)). Asp-87, Gly-88, and Asp-232 together coordinate Mn(2+).

Belongs to the PP2C family. Mg(2+) is required as a cofactor. It depends on Mn(2+) as a cofactor.

The enzyme catalyses O-phospho-L-seryl-[protein] + H2O = L-seryl-[protein] + phosphate. It catalyses the reaction O-phospho-L-threonyl-[protein] + H2O = L-threonyl-[protein] + phosphate. The polypeptide is Protein phosphatase PTC7 homolog fig (Drosophila simulans (Fruit fly)).